The chain runs to 178 residues: Cytochrome b6-f complex iron-sulfur subunit (178 aa).

A helical transmembrane segment spans residues 20–42 (LLTFGTATGVALGALYPVANYFM). Residues 65-161 (KTGWLATHQA…VDIEDDAVLV (97 aa)) enclose the Rieske domain. 4 residues coordinate [2Fe-2S] cluster: Cys-107, His-109, Cys-125, and His-128. Cys-112 and Cys-127 form a disulfide bridge.

The protein belongs to the Rieske iron-sulfur protein family. The 4 large subunits of the cytochrome b6-f complex are cytochrome b6, subunit IV (17 kDa polypeptide, PetD), cytochrome f and the Rieske protein, while the 4 small subunits are PetG, PetL, PetM and PetN. The complex functions as a dimer. [2Fe-2S] cluster is required as a cofactor.

It localises to the cellular thylakoid membrane. The catalysed reaction is 2 oxidized [plastocyanin] + a plastoquinol + 2 H(+)(in) = 2 reduced [plastocyanin] + a plastoquinone + 4 H(+)(out). Functionally, component of the cytochrome b6-f complex, which mediates electron transfer between photosystem II (PSII) and photosystem I (PSI), cyclic electron flow around PSI, and state transitions. The sequence is that of Cytochrome b6-f complex iron-sulfur subunit from Prochlorococcus marinus (strain AS9601).